A 26-amino-acid polypeptide reads, in one-letter code: Coenzyme PQQ synthesis protein A (26 aa).

Residues 16-20 constitute a cross-link (pyrroloquinoline quinone (Glu-Tyr)); sequence EINSY.

This sequence belongs to the PqqA family.

Its pathway is cofactor biosynthesis; pyrroloquinoline quinone biosynthesis. Functionally, required for coenzyme pyrroloquinoline quinone (PQQ) biosynthesis. PQQ is probably formed by cross-linking a specific glutamate to a specific tyrosine residue and excising these residues from the peptide. In Gluconacetobacter diazotrophicus (strain ATCC 49037 / DSM 5601 / CCUG 37298 / CIP 103539 / LMG 7603 / PAl5), this protein is Coenzyme PQQ synthesis protein A.